Reading from the N-terminus, the 712-residue chain is Ferric reductase transmembrane component 6 (712 aa).

The first 17 residues, 1–17 (MHRTLLFLTWLISLTKA), serve as a signal peptide directing secretion. The Vacuolar segment spans residues 18–167 (FNIKLPHTEK…HAHAYNLDIS (150 aa)). N-linked (GlcNAc...) asparagine glycans are attached at residues N89, N112, and N124. The helical transmembrane segment at 168-188 (SVYGAYLTYYFVIVGIIAVFF) threads the bilayer. Topologically, residues 189 to 244 (HMSHYNGLNRALFASRFVNYIRGHFVLPTFLVDKHANHFKFLNVEVFTGLMPNSLE) are cytoplasmic. The helical transmembrane segment at 245–265 (AWIIFGYTLANIIFLSISYII) threads the bilayer. Topologically, residues 266–287 (DPYNLIFNSHLSQFTRLLADRS) are vacuolar. In terms of domain architecture, Ferric oxidoreductase spans 287–411 (SGILAFTQFP…YCCWQHVKIF (125 aa)). The chain crosses the membrane as a helical span at residues 288-308 (GILAFTQFPLIIIFTARNSFL). Residues 309–328 (EFLTGVKFNSFISFHKWIGR) are Cytoplasmic-facing. Heme-binding residues include H323 and H337. A helical membrane pass occupies residues 329-349 (IMVLNATIHSLSYSLFAIINH). At 350–360 (AFKISNKQLYW) the chain is on the vacuolar side. Residues 361–381 (KFGIASITVLCVLLVLSLGIV) form a helical membrane-spanning segment. Residues 382–387 (RKRHYE) lie on the Cytoplasmic side of the membrane. A helical transmembrane segment spans residues 388-408 (FFLYTHIILALLFFYCCWQHV). The heme site is built by H393 and H407. The Vacuolar segment spans residues 409 to 416 (KIFNGWKE). The region spanning 412–546 (NGWKEWIVVS…EGPYGPSNLH (135 aa)) is the FAD-binding FR-type domain. A helical transmembrane segment spans residues 417–437 (WIVVSLLIWGLEKLFRIWNIL). Residues 438–712 (QFRFPKATLI…IEYFEEYQCW (275 aa)) are Cytoplasmic-facing. An FAD-binding site is contributed by 493–499 (HPFTIID). Residues 538-541 (GPYG) and 678-679 (CG) contribute to the NADP(+) site.

This sequence belongs to the ferric reductase (FRE) family. FAD serves as cofactor.

It is found in the vacuole membrane. The enzyme catalyses 2 a Fe(II)-siderophore + NADP(+) + H(+) = 2 a Fe(III)-siderophore + NADPH. Functionally, metalloreductase responsible for reducing vacuolar iron and copper prior to transport into the cytosol. Catalyzes the reduction of Fe(3+) to Fe(2+) and Cu(2+) to Cu(+), respectively, which can then be transported by the respective vacuolar efflux systems to the cytosol. In Saccharomyces cerevisiae (strain ATCC 204508 / S288c) (Baker's yeast), this protein is Ferric reductase transmembrane component 6 (FRE6).